We begin with the raw amino-acid sequence, 101 residues long: Putative pterin-4-alpha-carbinolamine dehydratase (101 aa).

This sequence belongs to the pterin-4-alpha-carbinolamine dehydratase family.

The enzyme catalyses (4aS,6R)-4a-hydroxy-L-erythro-5,6,7,8-tetrahydrobiopterin = (6R)-L-erythro-6,7-dihydrobiopterin + H2O. This is Putative pterin-4-alpha-carbinolamine dehydratase from Rhodopseudomonas palustris (strain BisB18).